The chain runs to 130 residues: Acidic phospholipase A2 daboiatoxin B chain (130 aa).

Residues 1 to 8 form the signal peptide; the sequence is MCLIGVEG. 7 disulfide bridges follow: cysteine 34/cysteine 123, cysteine 36/cysteine 52, cysteine 51/cysteine 103, cysteine 57/cysteine 130, cysteine 58/cysteine 96, cysteine 65/cysteine 89, and cysteine 83/cysteine 94. Ca(2+) is bound by residues tyrosine 35, glycine 37, and glycine 39. Histidine 55 is a catalytic residue. A Ca(2+)-binding site is contributed by aspartate 56. Aspartate 97 is a catalytic residue.

It belongs to the phospholipase A2 family. Group II subfamily. D49 sub-subfamily. As to quaternary structure, heterodimer of an acidic protein having phospholipase A2 activity (B chain) and an A chain which weakly inhibits the B chain enzymatic activity but potentiates its lethal potency. Requires Ca(2+) as cofactor. Expressed by the venom gland.

The protein resides in the secreted. It carries out the reaction a 1,2-diacyl-sn-glycero-3-phosphocholine + H2O = a 1-acyl-sn-glycero-3-phosphocholine + a fatty acid + H(+). In terms of biological role, monomer: Snake venom phospholipase A2 (PLA2) that shows a high PLA2 activity (2110 umol/min/mg). Heterodimer (A and B chains): snake venom phospholipase A2 that shows a moderate PLA2 activity (1377 umol/min/mg). Acts as a presynaptic neurotoxin. In vivo, induces edema and produces neurotoxic symptoms in mice. It exhibits indirect hemolysis and a strong myonecrotic activity and is cytotoxic. PLA2 catalyzes the calcium-dependent hydrolysis of the 2-acyl groups in 3-sn-phosphoglycerides. The polypeptide is Acidic phospholipase A2 daboiatoxin B chain (Daboia siamensis (Eastern Russel's viper)).